Here is a 43-residue protein sequence, read N- to C-terminus: Cytochrome b559 subunit beta (43 aa).

A helical membrane pass occupies residues 18-34; that stretch reads WLAVHTLAVPSVFFLGA. A heme-binding site is contributed by H22.

Belongs to the PsbE/PsbF family. Heterodimer of an alpha subunit and a beta subunit. PSII is composed of 1 copy each of membrane proteins PsbA, PsbB, PsbC, PsbD, PsbE, PsbF, PsbH, PsbI, PsbJ, PsbK, PsbL, PsbM, PsbT, PsbX, PsbY, PsbZ, Psb30/Ycf12, peripheral proteins PsbO, CyanoQ (PsbQ), PsbU, PsbV and a large number of cofactors. It forms dimeric complexes. Requires heme b as cofactor.

It is found in the cellular thylakoid membrane. This b-type cytochrome is tightly associated with the reaction center of photosystem II (PSII). PSII is a light-driven water:plastoquinone oxidoreductase that uses light energy to abstract electrons from H(2)O, generating O(2) and a proton gradient subsequently used for ATP formation. It consists of a core antenna complex that captures photons, and an electron transfer chain that converts photonic excitation into a charge separation. The sequence is that of Cytochrome b559 subunit beta from Picosynechococcus sp. (strain ATCC 27264 / PCC 7002 / PR-6) (Agmenellum quadruplicatum).